We begin with the raw amino-acid sequence, 585 residues long: A-type ATP synthase subunit A (585 aa).

An ATP-binding site is contributed by 231 to 238; the sequence is GPFGSGKT.

The protein belongs to the ATPase alpha/beta chains family. Has multiple subunits with at least A(3), B(3), C, D, E, F, H, I and proteolipid K(x).

It is found in the cell membrane. It catalyses the reaction ATP + H2O + 4 H(+)(in) = ADP + phosphate + 5 H(+)(out). In terms of biological role, produces ATP from ADP in the presence of a proton gradient across the membrane. The archaeal alpha chain is a catalytic subunit. Functionally, component of the A-type ATP synthase that produces ATP from ADP in the presence of a proton gradient across the membrane. The A chain is the catalytic subunit. This chain is A-type ATP synthase subunit A, found in Thermococcus sp. (strain KI).